Consider the following 285-residue polypeptide: 33 kDa chaperonin (285 aa).

2 disulfide bridges follow: Cys228-Cys230 and Cys261-Cys264.

This sequence belongs to the HSP33 family. In terms of processing, under oxidizing conditions two disulfide bonds are formed involving the reactive cysteines. Under reducing conditions zinc is bound to the reactive cysteines and the protein is inactive.

The protein localises to the cytoplasm. In terms of biological role, redox regulated molecular chaperone. Protects both thermally unfolding and oxidatively damaged proteins from irreversible aggregation. Plays an important role in the bacterial defense system toward oxidative stress. The protein is 33 kDa chaperonin of Hahella chejuensis (strain KCTC 2396).